We begin with the raw amino-acid sequence, 188 residues long: Elongation factor P (188 aa).

It belongs to the elongation factor P family.

The protein localises to the cytoplasm. It participates in protein biosynthesis; polypeptide chain elongation. Its function is as follows. Involved in peptide bond synthesis. Stimulates efficient translation and peptide-bond synthesis on native or reconstituted 70S ribosomes in vitro. Probably functions indirectly by altering the affinity of the ribosome for aminoacyl-tRNA, thus increasing their reactivity as acceptors for peptidyl transferase. This is Elongation factor P from Christiangramia forsetii (strain DSM 17595 / CGMCC 1.15422 / KT0803) (Gramella forsetii).